Reading from the N-terminus, the 360-residue chain is Histidinol-phosphate aminotransferase 2 (360 aa).

At lysine 218 the chain carries N6-(pyridoxal phosphate)lysine.

Belongs to the class-II pyridoxal-phosphate-dependent aminotransferase family. Histidinol-phosphate aminotransferase subfamily. In terms of assembly, homodimer. Requires pyridoxal 5'-phosphate as cofactor.

It carries out the reaction L-histidinol phosphate + 2-oxoglutarate = 3-(imidazol-4-yl)-2-oxopropyl phosphate + L-glutamate. The protein operates within amino-acid biosynthesis; L-histidine biosynthesis; L-histidine from 5-phospho-alpha-D-ribose 1-diphosphate: step 7/9. The sequence is that of Histidinol-phosphate aminotransferase 2 from Nitrosococcus oceani (strain ATCC 19707 / BCRC 17464 / JCM 30415 / NCIMB 11848 / C-107).